The chain runs to 707 residues: Alpha-hemolysin translocation ATP-binding protein HlyB (707 aa).

One can recognise a Peptidase C39 domain in the interval aspartate 2–isoleucine 125. Histidine 83 is an active-site residue. The region spanning phenylalanine 154 to glutamine 436 is the ABC transmembrane type-1 domain. Helical transmembrane passes span leucine 158–valine 178, leucine 191–leucine 211, alanine 269–tyrosine 289, leucine 295–leucine 315, and alanine 387–isoleucine 407. Positions isoleucine 468 to glutamine 703 constitute an ABC transporter domain. An ATP-binding site is contributed by glycine 502–serine 509.

It belongs to the ABC transporter superfamily. Protein-1 exporter (TC 3.A.1.109) family.

It localises to the cell membrane. Its function is as follows. Involved in the export of hemolysin A. In Proteus vulgaris, this protein is Alpha-hemolysin translocation ATP-binding protein HlyB (hlyB).